The primary structure comprises 294 residues: Cyclin-dependent kinase A-1 (294 aa).

The region spanning 4 to 287 (YEKEEKIGEG…ARQALEHEYF (284 aa)) is the Protein kinase domain. Residues 10 to 18 (IGEGTYGVV) and Lys33 contribute to the ATP site. Thr14 is modified (phosphothreonine). Phosphotyrosine is present on Tyr15. Asp127 functions as the Proton acceptor in the catalytic mechanism. Phosphothreonine; by CAK is present on Thr161.

The protein belongs to the protein kinase superfamily. CMGC Ser/Thr protein kinase family. CDC2/CDKX subfamily. Post-translationally, phosphorylated at Thr-161 by CDKD-1. In terms of tissue distribution, expressed in the dividing region of the root apex and in differentiated cells such as those in the sclerenchyma, pericycle and parenchyma of the central cylinder.

The catalysed reaction is L-seryl-[protein] + ATP = O-phospho-L-seryl-[protein] + ADP + H(+). It catalyses the reaction L-threonyl-[protein] + ATP = O-phospho-L-threonyl-[protein] + ADP + H(+). It carries out the reaction [DNA-directed RNA polymerase] + ATP = phospho-[DNA-directed RNA polymerase] + ADP + H(+). The polypeptide is Cyclin-dependent kinase A-1 (CDKA-1) (Oryza sativa subsp. japonica (Rice)).